Consider the following 538-residue polypeptide: Cytochrome P450 monooxygenase verH (538 aa).

A helical membrane pass occupies residues 2–21 (VFAMLVVCWSIFLGLWMLVS). C445 lines the heme pocket.

This sequence belongs to the cytochrome P450 family. Requires heme as cofactor.

It localises to the membrane. It functions in the pathway secondary metabolite biosynthesis; terpenoid biosynthesis. Its pathway is mycotoxin biosynthesis. In terms of biological role, cytochrome P450 monooxygenase; part of the gene cluster that mediates the biosynthesis of the neurotoxin verrucosidin, a methylated alpha-pyrone polyketide that inhibits oxidative phosphorylation in mitochondria and thereby causes neurological diseases. The carbon backbone of verrucosidin is synthesized by the HR-PKS verA, and further modified by the other verrucodidin cluster enzymes. This is Cytochrome P450 monooxygenase verH from Penicillium polonicum.